The chain runs to 605 residues: FAD-linked oxidoreductase easE (605 aa).

An N-terminal signal peptide occupies residues 1-20 (MRHFVTFVVGFLLSWGFLSS). Asparagine 46 and asparagine 105 each carry an N-linked (GlcNAc...) asparagine glycan. The FAD-binding PCMH-type domain occupies 122–307 (CHQGRLPLYS…TQATVRAFPD (186 aa)). Asparagine 370 carries N-linked (GlcNAc...) asparagine glycosylation.

This sequence belongs to the oxygen-dependent FAD-linked oxidoreductase family. FAD serves as cofactor.

Its pathway is alkaloid biosynthesis; ergot alkaloid biosynthesis. FAD-linked oxidoreductase; part of the gene cluster that mediates the biosynthesis of fungal ergot alkaloid ergovaline, the predominant ergopeptine product in E.festucae var. lolii. DmaW catalyzes the first step of ergot alkaloid biosynthesis by condensing dimethylallyl diphosphate (DMAP) and tryptophan to form 4-dimethylallyl-L-tryptophan. The second step is catalyzed by the methyltransferase easF that methylates 4-dimethylallyl-L-tryptophan in the presence of S-adenosyl-L-methionine, resulting in the formation of 4-dimethylallyl-L-abrine. The catalase easC and the FAD-dependent oxidoreductase easE then transform 4-dimethylallyl-L-abrine to chanoclavine-I which is further oxidized by easD in the presence of NAD(+), resulting in the formation of chanoclavine-I aldehyde. Agroclavine dehydrogenase easG then mediates the conversion of chanoclavine-I aldehyde to agroclavine via a non-enzymatic adduct reaction: the substrate is an iminium intermediate that is formed spontaneously from chanoclavine-I aldehyde in the presence of glutathione. The presence of easA is not required to complete this reaction. Further conversion of agroclavine to paspalic acid is a two-step process involving oxidation of agroclavine to elymoclavine and of elymoclavine to paspalic acid, the second step being performed by the elymoclavine oxidase cloA. Paspalic acid is then further converted to D-lysergic acid. Ergovaline is assembled from D-lysergic acid and three different amino acids by the D-lysergyl-peptide-synthetase composed of a monomudular (lpsB) and a trimodular (lpsA) nonribosomal peptide synthetase subunit. This Epichloe festucae var. lolii (Neotyphodium lolii) protein is FAD-linked oxidoreductase easE.